Consider the following 495-residue polypeptide: MGQIITFFQEVPHIIEEVMNIVLITLSLLAILKGVYNVMTCGLIGLISFLLLCGKSCSLIYKDTYNFSSIELDLSHLNMTLPMSCSRNNSHHYVFFNGSGLEMTFTNDSLLNHKFCNLSDAHKKNLYDHALMGIVTTFHLSIPNFNQYEAMACDFNGGNISIQYNLSHNDRTDAMNHCGTVANGVLDAFYRFHWGRNITYIAQLPNGDGTGRWTFCYATSYKYLVIQNISWADHCQMSRPTPIGFASILSQRIRSIYISRRLMSTFTWSLSDSSGTENPGGYCLTRWMLFAADLKCFGNTAIAKCNLNHDEEFCDMLRLIDFNKQALKTFKSEVNHGLQLITKAINALINDQLIMKNHLRDLMGIPYCNYSKFWYLNDTRTGRVSLPKCWMISNGTYLNETHFSDEIEQEADNMITEMLRKEYQERQGKTPLGLVDLFIFSTSFYSITVFLHLIKIPTHRHIVGQGCPKPHRLNSRAICSCGAYKQPGLPTKWKR.

Glycine 2 carries N-myristoyl glycine; by host lipidation. At 2–17 (GQIITFFQEVPHIIEE) the chain is on the extracellular side. The helical transmembrane segment at 18–33 (VMNIVLITLSLLAILK) threads the bilayer. Residues 34–58 (GVYNVMTCGLIGLISFLLLCGKSCS) are Cytoplasmic-facing. Cysteine 57 serves as a coordination point for Zn(2+). Topologically, residues 59–436 (LIYKDTYNFS…QGKTPLGLVD (378 aa)) are extracellular. Asparagine 78, asparagine 88, asparagine 107, asparagine 117, and asparagine 165 each carry an N-linked (GlcNAc...) asparagine; by host glycan. Disulfide bonds link cysteine 85–cysteine 235, cysteine 116–cysteine 153, cysteine 178–cysteine 216, cysteine 283–cysteine 296, cysteine 305–cysteine 314, and cysteine 368–cysteine 389. Asparagine 228 is a glycosylation site (N-linked (GlcNAc...) asparagine; by host). Asparagine 369, asparagine 377, asparagine 394, and asparagine 399 each carry an N-linked (GlcNAc...) asparagine; by host glycan. A helical transmembrane segment spans residues 437–457 (LFIFSTSFYSITVFLHLIKIP). Over 458-495 (THRHIVGQGCPKPHRLNSRAICSCGAYKQPGLPTKWKR) the chain is Cytoplasmic. Zn(2+) is bound by residues histidine 459, histidine 461, cysteine 467, histidine 471, cysteine 479, and cysteine 481.

The protein belongs to the arenaviridae GPC protein family. As to quaternary structure, interacts with glycoprotein G2. Part of the GP complex (GP-C) together with glycoprotein G1 and glycoprotein G2. The GP-complex interacts with protein Z, which interacts with ribonucleocapsid; these interactions may induce virion budding. In terms of assembly, homotrimer; disulfide-linked. In pre-fusion state, G1 homotrimers bind G2 homotrimers via ionic interactions. Part of the GP complex (GP-C) together with glycoprotein G2 and the stable signal peptide. The GP-complex interacts with protein Z, which interacts with ribonucleocapsid; these interactions may induce virion budding. Homotrimer. Interacts with the stable signal peptide. In pre-fusion state, G2 homotrimers bind G1 homotrimers via ionic interactions. Part of the GP complex (GP-C) together with glycoprotein G1 and the stable signal peptide. Acidification in the endosome triggers rearrangements, which ultimately leads to a 6 helix bundle formed by the two heptad repeat domains (HR1 and HR2) in post-fusion state. The GP-complex interacts with protein Z, which interacts with ribonucleocapsid; these interactions may induce virion budding. Specific enzymatic cleavages in vivo yield mature proteins. GP-C polyprotein is cleaved in the endoplasmic reticulum by the host protease MBTPS1. Only cleaved glycoprotein is incorporated into virions. Post-translationally, the SSP remains stably associated with the GP complex following cleavage by signal peptidase and plays crucial roles in the trafficking of GP through the secretory pathway. In terms of processing, myristoylation is necessary for GP2-mediated fusion activity.

Its subcellular location is the virion membrane. It localises to the host endoplasmic reticulum membrane. The protein localises to the host Golgi apparatus membrane. The protein resides in the host cell membrane. In terms of biological role, functions as a cleaved signal peptide that is retained as the third component of the GP complex (GP-C). Helps to stabilize the spike complex in its native conformation. The SSP is required for efficient glycoprotein expression, post-translational maturation cleavage of G1 and G2, glycoprotein transport to the cell surface plasma membrane, formation of infectious virus particles, and acid pH-dependent glycoprotein-mediated cell fusion. Forms the virion spikes together with glycoprotein G2. The glycoprotein spike trimers are connected to the underlying matrix. Mediates virus attachment to host receptor alpha-dystroglycan DAG1. This interaction leads to virion entry into the host cell through the endosomal pathway. Functionally, forms the virion spikes together with glycoprotein G1. The glycoprotein spike trimers are connected to the underlying matrix. Class I viral fusion protein that directs fusion of viral and host endosomal membranes, leading to delivery of the nucleocapsid into the cytoplasm. Membrane fusion is mediated by irreversible conformational changes induced by acidification. The polypeptide is Pre-glycoprotein polyprotein GP complex (Ippy mammarenavirus (isolate Rat/Central African Republic/Dak An B 188 d/1970) (IPPYV)).